The following is a 283-amino-acid chain: Shikimate kinase (283 aa).

86-96 (PLKSGLSSSSA) contributes to the ATP binding site.

Belongs to the GHMP kinase family. Archaeal shikimate kinase subfamily.

Its subcellular location is the cytoplasm. The enzyme catalyses shikimate + ATP = 3-phosphoshikimate + ADP + H(+). Its pathway is metabolic intermediate biosynthesis; chorismate biosynthesis; chorismate from D-erythrose 4-phosphate and phosphoenolpyruvate: step 5/7. This is Shikimate kinase from Methanococcus vannielii (strain ATCC 35089 / DSM 1224 / JCM 13029 / OCM 148 / SB).